Here is a 394-residue protein sequence, read N- to C-terminus: Queuine tRNA-ribosyltransferase (394 aa).

The Proton acceptor role is filled by aspartate 95. Substrate contacts are provided by residues 95 to 99 (DSGGF), aspartate 149, glutamine 190, and glycine 217. The tract at residues 248 to 254 (GVGTPID) is RNA binding. Catalysis depends on aspartate 267, which acts as the Nucleophile. Residues 272 to 276 (TRNAR) form an RNA binding; important for wobble base 34 recognition region. Zn(2+) contacts are provided by cysteine 305, cysteine 307, cysteine 310, and histidine 337. Residues 375–394 (NDANETVGATESTESTESTE) are disordered.

Belongs to the queuine tRNA-ribosyltransferase family. As to quaternary structure, homodimer. Within each dimer, one monomer is responsible for RNA recognition and catalysis, while the other monomer binds to the replacement base PreQ1. Requires Zn(2+) as cofactor.

The enzyme catalyses 7-aminomethyl-7-carbaguanine + guanosine(34) in tRNA = 7-aminomethyl-7-carbaguanosine(34) in tRNA + guanine. Its pathway is tRNA modification; tRNA-queuosine biosynthesis. Catalyzes the base-exchange of a guanine (G) residue with the queuine precursor 7-aminomethyl-7-deazaguanine (PreQ1) at position 34 (anticodon wobble position) in tRNAs with GU(N) anticodons (tRNA-Asp, -Asn, -His and -Tyr). Catalysis occurs through a double-displacement mechanism. The nucleophile active site attacks the C1' of nucleotide 34 to detach the guanine base from the RNA, forming a covalent enzyme-RNA intermediate. The proton acceptor active site deprotonates the incoming PreQ1, allowing a nucleophilic attack on the C1' of the ribose to form the product. After dissociation, two additional enzymatic reactions on the tRNA convert PreQ1 to queuine (Q), resulting in the hypermodified nucleoside queuosine (7-(((4,5-cis-dihydroxy-2-cyclopenten-1-yl)amino)methyl)-7-deazaguanosine). The sequence is that of Queuine tRNA-ribosyltransferase from Sorangium cellulosum (strain So ce56) (Polyangium cellulosum (strain So ce56)).